An 89-amino-acid polypeptide reads, in one-letter code: MTILASISSIGNVKSISKSNNFSSLSNSSLQSSNSIQCGGCGGGSPLIGTVGNLVGGVLVGTGIIVGTVVGTVNGVVGGLLSGPNCGCH.

It belongs to the hssA/B family.

This chain is HssA/B-like protein 15 (hssl15), found in Dictyostelium discoideum (Social amoeba).